The chain runs to 475 residues: Ribulose bisphosphate carboxylase large chain (475 aa).

Residues Met-1–Ser-2 constitute a propeptide that is removed on maturation. An N-acetylproline modification is found at Pro-3. The residue at position 14 (Lys-14) is an N6,N6,N6-trimethyllysine. Substrate-binding residues include Asn-123 and Thr-173. Lys-175 serves as the catalytic Proton acceptor. Lys-177 contributes to the substrate binding site. Residues Lys-201, Asp-203, and Glu-204 each coordinate Mg(2+). Position 201 is an N6-carboxylysine (Lys-201). The active-site Proton acceptor is the His-294. 3 residues coordinate substrate: Arg-295, His-327, and Ser-379.

The protein belongs to the RuBisCO large chain family. Type I subfamily. As to quaternary structure, heterohexadecamer of 8 large chains and 8 small chains; disulfide-linked. The disulfide link is formed within the large subunit homodimers. Mg(2+) is required as a cofactor. In terms of processing, the disulfide bond which can form in the large chain dimeric partners within the hexadecamer appears to be associated with oxidative stress and protein turnover.

It localises to the plastid. The protein resides in the chloroplast. It catalyses the reaction 2 (2R)-3-phosphoglycerate + 2 H(+) = D-ribulose 1,5-bisphosphate + CO2 + H2O. The catalysed reaction is D-ribulose 1,5-bisphosphate + O2 = 2-phosphoglycolate + (2R)-3-phosphoglycerate + 2 H(+). Its function is as follows. RuBisCO catalyzes two reactions: the carboxylation of D-ribulose 1,5-bisphosphate, the primary event in carbon dioxide fixation, as well as the oxidative fragmentation of the pentose substrate in the photorespiration process. Both reactions occur simultaneously and in competition at the same active site. In Chara vulgaris (Common stonewort), this protein is Ribulose bisphosphate carboxylase large chain.